A 319-amino-acid polypeptide reads, in one-letter code: Dehydrogenase/reductase SDR family member 9 (319 aa).

Residues 1 to 20 (MLLWVLALLFLCAFLWNYKG) form the signal peptide. NAD(+) contacts are provided by residues 34–58 (ITGC…RVIA) and Asp83. Residue Ser164 participates in substrate binding. The Proton acceptor role is filled by Tyr176. Lys180 serves as a coordination point for NAD(+).

This sequence belongs to the short-chain dehydrogenases/reductases (SDR) family. In terms of assembly, homotetramer. In terms of tissue distribution, highly expressed in epithelium of estrus uterus.

It localises to the microsome membrane. The protein localises to the endoplasmic reticulum membrane. It carries out the reaction 3beta-hydroxy-5alpha-pregnane-20-one + NAD(+) = 5alpha-pregnane-3,20-dione + NADH + H(+). The catalysed reaction is 17beta-hydroxy-5alpha-androstan-3-one + NAD(+) = 5alpha-androstan-3,17-dione + NADH + H(+). It catalyses the reaction androsterone + NAD(+) = 5alpha-androstan-3,17-dione + NADH + H(+). The enzyme catalyses 5alpha-androstane-3alpha,17beta-diol + NAD(+) = 17beta-hydroxy-5alpha-androstan-3-one + NADH + H(+). It carries out the reaction all-trans-retinol + NAD(+) = all-trans-retinal + NADH + H(+). The catalysed reaction is 3alpha-hydroxy-5alpha-pregnan-20-one + NAD(+) = 5alpha-pregnane-3,20-dione + NADH + H(+). 3-alpha-hydroxysteroid dehydrogenase that converts 3-alpha-tetrahydroprogesterone (allopregnanolone) to dihydroxyprogesterone and 3-alpha-androstanediol to dihydroxyprogesterone. Plays also role in the biosynthesis of retinoic acid from retinaldehyde. Can utilize both NADH and NADPH. In Rattus norvegicus (Rat), this protein is Dehydrogenase/reductase SDR family member 9 (Dhrs9).